A 298-amino-acid polypeptide reads, in one-letter code: Protease HtpX (298 aa).

Transmembrane regions (helical) follow at residues 4 to 24 and 38 to 58; these read IGLF…TMNL and LGNL…VSLA. Position 145 (H145) interacts with Zn(2+). Residue E146 is part of the active site. Residue H149 coordinates Zn(2+). 2 helical membrane-spanning segments follow: residues 160–180 and 194–214; these read LLQG…AYVV and ITFI…ASMI. E223 contributes to the Zn(2+) binding site.

It belongs to the peptidase M48B family. Zn(2+) is required as a cofactor.

It is found in the cell inner membrane. The polypeptide is Protease HtpX (Hydrogenovibrio crunogenus (strain DSM 25203 / XCL-2) (Thiomicrospira crunogena)).